Consider the following 262-residue polypeptide: Acyl-[acyl-carrier-protein]--UDP-N-acetylglucosamine O-acyltransferase (262 aa).

Belongs to the transferase hexapeptide repeat family. LpxA subfamily. Homotrimer.

It is found in the cytoplasm. It carries out the reaction a (3R)-hydroxyacyl-[ACP] + UDP-N-acetyl-alpha-D-glucosamine = a UDP-3-O-[(3R)-3-hydroxyacyl]-N-acetyl-alpha-D-glucosamine + holo-[ACP]. Its pathway is glycolipid biosynthesis; lipid IV(A) biosynthesis; lipid IV(A) from (3R)-3-hydroxytetradecanoyl-[acyl-carrier-protein] and UDP-N-acetyl-alpha-D-glucosamine: step 1/6. Its function is as follows. Involved in the biosynthesis of lipid A, a phosphorylated glycolipid that anchors the lipopolysaccharide to the outer membrane of the cell. In Herminiimonas arsenicoxydans, this protein is Acyl-[acyl-carrier-protein]--UDP-N-acetylglucosamine O-acyltransferase.